The sequence spans 484 residues: Probable cytochrome P450 508A1 (484 aa).

The chain crosses the membrane as a helical span at residues 1-21 (MALFEIIISLFVVYIIHNAIS). C428 contacts heme.

This sequence belongs to the cytochrome P450 family. The cofactor is heme.

The protein localises to the membrane. The protein is Probable cytochrome P450 508A1 (cyp508A1-1) of Dictyostelium discoideum (Social amoeba).